Consider the following 1159-residue polypeptide: WASH complex subunit 5 (1159 aa).

The protein belongs to the strumpellin family. Component of the WASH core complex also described as WASH regulatory complex (SHRC) composed of WASH (WASHC1, WASH2P or WASH3P), WASHC2 (WASHC2A or WASHC2C), WASHC3, WASHC4 and WASHC5. The WASH core complex associates via WASHC2 with the F-actin-capping protein dimer (formed by CAPZA1, CAPZA2 or CAPZA3 and CAPZB) in a transient or substoichiometric manner which was initially described as WASH complex. Interacts with VCP, PI4K2A.

The protein localises to the cytoplasm. It localises to the cytosol. The protein resides in the endoplasmic reticulum. Its subcellular location is the early endosome. Its function is as follows. Acts as a component of the WASH core complex that functions as a nucleation-promoting factor (NPF) at the surface of endosomes, where it recruits and activates the Arp2/3 complex to induce actin polymerization, playing a key role in the fission of tubules that serve as transport intermediates during endosome sorting. May be involved in axonal outgrowth. Involved in cellular localization of ADRB2. Involved in cellular trafficking of BLOC-1 complex cargos such as ATP7A and VAMP7. Involved in cytokinesis and following polar body extrusion during oocyte meiotic maturation. This chain is WASH complex subunit 5, found in Mus musculus (Mouse).